Consider the following 233-residue polypeptide: Riboflavin kinase (233 aa).

Positions 1-99 (MSGATSTGDV…YRRIFEDPGE (99 aa)) are unknown. Residues 100 to 233 (LALAGTVTSG…DDEVTIRVEA (134 aa)) are riboflavin kinase. 109 to 114 (GMGEGR) lines the CDP pocket. Mg(2+)-binding residues include threonine 138 and asparagine 140. Threonine 200 and glutamate 208 together coordinate FMN. 213-216 (VKLR) is a CDP binding site.

It belongs to the archaeal riboflavin kinase family. It depends on Mg(2+) as a cofactor.

The enzyme catalyses riboflavin + CTP = CDP + FMN + H(+). The protein operates within cofactor biosynthesis; FMN biosynthesis; FMN from riboflavin (CTP route): step 1/1. In terms of biological role, catalyzes the CTP-dependent phosphorylation of riboflavin (vitamin B2) to form flavin mononucleotide (FMN). The polypeptide is Riboflavin kinase (ribK) (Halobacterium salinarum (strain ATCC 700922 / JCM 11081 / NRC-1) (Halobacterium halobium)).